Consider the following 225-residue polypeptide: Ribosomal RNA small subunit methyltransferase G (225 aa).

S-adenosyl-L-methionine-binding positions include Gly62, 113–114, and Lys130; that span reads AE.

This sequence belongs to the methyltransferase superfamily. RNA methyltransferase RsmG family.

The protein resides in the cytoplasm. Its function is as follows. Specifically methylates the N7 position of a guanine in 16S rRNA. The polypeptide is Ribosomal RNA small subunit methyltransferase G (Petrotoga mobilis (strain DSM 10674 / SJ95)).